A 341-amino-acid chain; its full sequence is GTPase Obg (341 aa).

The 159-residue stretch at 1 to 159 (MKFVDEALIK…RNLRLELRVL (159 aa)) folds into the Obg domain. A disordered region spans residues 128 to 150 (TRYKSSVNRSPRQTTPGSPGESR). Over residues 129–144 (RYKSSVNRSPRQTTPG) the composition is skewed to polar residues. The OBG-type G domain occupies 160–334 (ADVGLLGLPN…LCYALMQLID (175 aa)). GTP is bound by residues 166 to 173 (GLPNAGKS), 191 to 195 (FTTLH), 213 to 216 (DIPG), 283 to 286 (NKID), and 315 to 317 (SAI). Positions 173 and 193 each coordinate Mg(2+).

Belongs to the TRAFAC class OBG-HflX-like GTPase superfamily. OBG GTPase family. In terms of assembly, monomer. The cofactor is Mg(2+).

It localises to the cytoplasm. An essential GTPase which binds GTP, GDP and possibly (p)ppGpp with moderate affinity, with high nucleotide exchange rates and a fairly low GTP hydrolysis rate. Plays a role in control of the cell cycle, stress response, ribosome biogenesis and in those bacteria that undergo differentiation, in morphogenesis control. The sequence is that of GTPase Obg from Legionella pneumophila (strain Lens).